Here is a 284-residue protein sequence, read N- to C-terminus: 4-diphosphocytidyl-2-C-methyl-D-erythritol kinase (284 aa).

The active site involves Lys-14. 98 to 108 (PMGGGLGGGSS) is an ATP binding site. Asp-140 is a catalytic residue.

It belongs to the GHMP kinase family. IspE subfamily.

The catalysed reaction is 4-CDP-2-C-methyl-D-erythritol + ATP = 4-CDP-2-C-methyl-D-erythritol 2-phosphate + ADP + H(+). Its pathway is isoprenoid biosynthesis; isopentenyl diphosphate biosynthesis via DXP pathway; isopentenyl diphosphate from 1-deoxy-D-xylulose 5-phosphate: step 3/6. Catalyzes the phosphorylation of the position 2 hydroxy group of 4-diphosphocytidyl-2C-methyl-D-erythritol. In Shewanella baltica (strain OS195), this protein is 4-diphosphocytidyl-2-C-methyl-D-erythritol kinase.